Reading from the N-terminus, the 505-residue chain is MFS-type transporter oryN (505 aa).

Positions 1-54 (MAVAELPNIVSTDSSPSPHPGSRLSSEPTDIESQKAPSNAEPKTDPNLVTWDGP) are disordered. 13 consecutive transmembrane segments (helical) span residues 69-89 (AFVT…SSIF), 106-126 (VVTL…PVWG), 135-155 (KWPM…VAVA), 166-186 (FLTG…LVDM), 193-213 (GVAM…APLM), 226-246 (FTQW…VFGL), 280-300 (GIKD…VTEP), 301-321 (ILLL…LVFV), 337-357 (ISAL…AIVV), 376-396 (LPLM…FAWT), 401-421 (IHWA…YMVF), 440-460 (IGAN…FGPF), and 468-488 (AWAS…PVLF).

This sequence belongs to the major facilitator superfamily. CAR1 family.

The protein resides in the membrane. Its function is as follows. MFS-type transporter; part of the gene cluster that mediates the biosynthesis of oryzines, natural products with an unusual maleidride backbone. The protein is MFS-type transporter oryN of Aspergillus oryzae (strain ATCC 42149 / RIB 40) (Yellow koji mold).